Reading from the N-terminus, the 466-residue chain is Alpha-1A adrenergic receptor (466 aa).

At 1–27 (MVLLSENASEGSNCTHPPAQVNISKAI) the chain is on the extracellular side. Asparagine 7, asparagine 13, and asparagine 22 each carry an N-linked (GlcNAc...) asparagine glycan. The chain crosses the membrane as a helical span at residues 28–51 (LLGVILGGLIIFGVLGNILVILSV). Residues 52–64 (ACHRHLHSVTHYY) lie on the Cytoplasmic side of the membrane. The chain crosses the membrane as a helical span at residues 65-88 (IVNLAVADLLLTSTVLPFSAIFEI). Residues 89–99 (LGYWAFGRVFC) are Extracellular-facing. Cysteine 99 and cysteine 176 form a disulfide bridge. The helical transmembrane segment at 100–122 (NIWAAVDVLCCTASIMGLCIISI) threads the bilayer. The Cytoplasmic segment spans residues 123 to 143 (DRYIGVSYPLRYPTIVTQRRG). Residues 144–167 (VRALLCVWALSLVISIGPLFGWRQ) traverse the membrane as a helical segment. At 168-181 (QAPEDETICQINEE) the chain is on the extracellular side. Residues 182 to 205 (PGYVLFSALGSFYVPLTIILVMYC) form a helical membrane-spanning segment. Residues 206 to 273 (RVYVVAKRES…FSREKKAAKT (68 aa)) are Cytoplasmic-facing. The residue at position 215 (serine 215) is a Phosphoserine; by PKA. A helical membrane pass occupies residues 274–297 (LGIVVGCFVLCWLPFFLVMPIGSF). Residues 298–305 (FPNFKPPE) are Extracellular-facing. Residues 306–329 (TVFKIVFWLGYLNSCINPIIYPCS) form a helical membrane-spanning segment. The Cytoplasmic segment spans residues 330-466 (SQEFKKAFQN…ISLGENGEEV (137 aa)). Residues 334–349 (KKAFQNVLRIQCLRRR) carry the Nuclear localization signal motif. Cysteine 345 is lipidated: S-palmitoyl cysteine.

It belongs to the G-protein coupled receptor 1 family. Adrenergic receptor subfamily. ADRA1A sub-subfamily. In terms of assembly, homo- and heterooligomer. Heterooligomerizes with ADRA1B homooligomers in cardiac myocytes. Interacts with CAVIN4.

It is found in the nucleus membrane. It localises to the cell membrane. The protein resides in the cytoplasm. Its subcellular location is the membrane. The protein localises to the caveola. This alpha-adrenergic receptor mediates its action by association with G proteins that activate a phosphatidylinositol-calcium second messenger system. Its effect is mediated by G(q) and G(11) proteins. Nuclear ADRA1A-ADRA1B heterooligomers regulate phenylephrine (PE)-stimulated ERK signaling in cardiac myocytes. The sequence is that of Alpha-1A adrenergic receptor (Adra1a) from Mus musculus (Mouse).